The primary structure comprises 446 residues: Palmitoyltransferase PFA4 (446 aa).

Over 1-8 (MAVQLKWP) the chain is Cytoplasmic. Residues 9-29 (ILGVIIPCIIIFSLSYGSHYF) traverse the membrane as a helical segment. Residues 30–40 (ILRHHLTMKQQ) lie on the Lumenal side of the membrane. The helical transmembrane segment at 41 to 61 (LIYEFYVTMIWISYLLAIYTN) threads the bilayer. Residues 62–161 (PGRVPKNYKP…GNNNLPHFMR (100 aa)) are Cytoplasmic-facing. The DHHC domain maps to 114–164 (RYCKKCNNYKPPRSHHCKICQQCVLQMDHHCPWTLNCVGNNNLPHFMRFLG). Cysteine 144 acts as the S-palmitoyl cysteine intermediate in catalysis. The helical transmembrane segment at 162-182 (FLGWIIWGTGYLMIQLIKLII) threads the bilayer. Residues 183–201 (NYYENSNMPHYLFNKTELV) lie on the Lumenal side of the membrane. The chain crosses the membrane as a helical span at residues 202-222 (AIIAITPLNFFVFASILVLFI). The Cytoplasmic segment spans residues 223–446 (RCLINICKGM…TDFGVDEDSD (224 aa)).

Belongs to the DHHC palmitoyltransferase family. PFA4 subfamily.

It localises to the endoplasmic reticulum membrane. The catalysed reaction is L-cysteinyl-[protein] + hexadecanoyl-CoA = S-hexadecanoyl-L-cysteinyl-[protein] + CoA. Its function is as follows. Mediates the reversible addition of palmitate to target proteins, thereby regulating their membrane association and biological function. This chain is Palmitoyltransferase PFA4, found in Candida albicans (strain SC5314 / ATCC MYA-2876) (Yeast).